Reading from the N-terminus, the 394-residue chain is Bone morphogenetic protein 2 (394 aa).

A signal peptide spans 1–19 (MVAGTRCLLVLLLPQVLLG). Residues 20–280 (GAAGLIPELG…GHPLHKREKR (261 aa)) constitute a propeptide, cleaved by PCSK5. Position 86 is a phosphoserine (Ser-86). Asn-134, Asn-162, and Asn-198 each carry an N-linked (GlcNAc...) asparagine glycan. Residues 269–291 (GKGHPLHKREKRQAKHKQRKRLK) are disordered. Over residues 272 to 291 (HPLHKREKRQAKHKQRKRLK) the composition is skewed to basic residues. Disulfide bonds link Cys-294/Cys-359, Cys-323/Cys-391, and Cys-327/Cys-393. Asn-336 carries an N-linked (GlcNAc...) asparagine glycan.

This sequence belongs to the TGF-beta family. In terms of assembly, homodimer; disulfide-linked. Interacts with SOSTDC1. Interacts with GREM2, RGMA, RGMB and RGMC. Interacts with ASPN. Interacts with MAFP5. Interacts with FBN1 (via N-terminal domain) and FBN2. Interacts with type I receptor BMPR1A. Interacts with type II receptor BMPR2. Interacts with SCUBE3. Interacts with TNFAIP6 (primarily via Link domain); this interaction is inhibited by hyaluronan. Interacts with ERFE. Interacts with BMPR1A/ALK3; the interaction may induce HAMP expression. Forms heterodimers with BMP6 in vitro; the heterodimer then binds to its receptor BMPR1A /ALK3 and may induce HAMP expression. Interacts with TGFBR3.

The protein resides in the secreted. In terms of biological role, growth factor of the TGF-beta superfamily that plays essential roles in many developmental processes, including cardiogenesis, neurogenesis, and osteogenesis. Induces cartilage and bone formation. Initiates the canonical BMP signaling cascade by associating with type I receptor BMPR1A and type II receptor BMPR2. Once all three components are bound together in a complex at the cell surface, BMPR2 phosphorylates and activates BMPR1A. In turn, BMPR1A propagates signal by phosphorylating SMAD1/5/8 that travel to the nucleus and act as activators and repressors of transcription of target genes. Also acts to promote expression of HAMP, via the interaction with its receptor BMPR1A/ALK3. Can also signal through non-canonical pathways such as ERK/MAP kinase signaling cascade that regulates osteoblast differentiation. Also stimulates the differentiation of myoblasts into osteoblasts via the EIF2AK3-EIF2A-ATF4 pathway by stimulating EIF2A phosphorylation which leads to increased expression of ATF4 which plays a central role in osteoblast differentiation. Acts as a positive regulator of odontoblast differentiation during mesenchymal tooth germ formation, expression is repressed during the bell stage by MSX1-mediated inhibition of CTNNB1 signaling. The protein is Bone morphogenetic protein 2 (Bmp2) of Mus musculus (Mouse).